A 344-amino-acid polypeptide reads, in one-letter code: N-acetyl-gamma-glutamyl-phosphate reductase (344 aa).

Residue cysteine 148 is part of the active site.

Belongs to the NAGSA dehydrogenase family. Type 1 subfamily.

The protein resides in the cytoplasm. It carries out the reaction N-acetyl-L-glutamate 5-semialdehyde + phosphate + NADP(+) = N-acetyl-L-glutamyl 5-phosphate + NADPH + H(+). The protein operates within amino-acid biosynthesis; L-arginine biosynthesis; N(2)-acetyl-L-ornithine from L-glutamate: step 3/4. In terms of biological role, catalyzes the NADPH-dependent reduction of N-acetyl-5-glutamyl phosphate to yield N-acetyl-L-glutamate 5-semialdehyde. The sequence is that of N-acetyl-gamma-glutamyl-phosphate reductase from Clostridium beijerinckii (strain ATCC 51743 / NCIMB 8052) (Clostridium acetobutylicum).